A 609-amino-acid chain; its full sequence is Grainyhead-like protein 1 homolog (609 aa).

The interval 1–91 (MTQDYDNKRP…EHDHADHEHS (91 aa)) is transcription activation. The segment at 183 to 207 (SDHFTSNNQPPNSQRRTPDSTFSET) is disordered. Over residues 185–206 (HFTSNNQPPNSQRRTPDSTFSE) the composition is skewed to polar residues. The region spanning 239 to 465 (AGNNFEYTLE…DLDTQPVLFI (227 aa)) is the Grh/CP2 DB domain. Interaction with DNA stretches follow at residues 371–380 (TDFSSQKGVK) and 418–421 (RKIR).

It belongs to the grh/CP2 family. Grainyhead subfamily. Binds DNA as homodimer.

Its subcellular location is the nucleus. Functionally, transcription factor involved in epithelial development. Binds directly to the consensus DNA sequence 5'-AACCGGTT-3' and modulates expression of epidermal-specific genes, including XK81A1. Important regulator of DSG1 in the context of epidermal differentiation. Regulates the maintenance of skin barrier. No genetic interaction with GRHL3, nor functional cooperativity due to diverse target gene selectivity during epithelia development. Functions downstream of BMP-signaling cascade modulating endogenous bmp4-responsive targets. The sequence is that of Grainyhead-like protein 1 homolog from Xenopus laevis (African clawed frog).